The following is a 190-amino-acid chain: Elongation factor P-like protein (190 aa).

The protein belongs to the elongation factor P family.

The protein is Elongation factor P-like protein of Edwardsiella ictaluri (strain 93-146).